Consider the following 123-residue polypeptide: uncharacterized protein (123 aa).

2 disordered regions span residues 1-33 and 82-123; these read MAPPGGKINRPRTELKKKLFKRRRVLSRDRRRK and EKAA…EDKS. Positions 18–33 are enriched in basic residues; that stretch reads KLFKRRRVLSRDRRRK.

This is an uncharacterized protein from Mus musculus (Mouse).